Here is a 617-residue protein sequence, read N- to C-terminus: Vacuolar protein sorting-associated protein 33B (617 aa).

An N-acetylalanine modification is found at Ala2.

It belongs to the STXBP/unc-18/SEC1 family. As to quaternary structure, interacts with RAB11A and VIPAS39. Associates with adapter protein complex 3 (AP-3), clathrin:AP-3 and clathrin:HGS complexes. Post-translationally, phosphorylated on tyrosine residues.

It is found in the late endosome membrane. The protein localises to the lysosome membrane. It localises to the early endosome. Its subcellular location is the cytoplasmic vesicle. The protein resides in the clathrin-coated vesicle. It is found in the recycling endosome. In terms of biological role, may play a role in vesicle-mediated protein trafficking to lysosomal compartments and in membrane docking/fusion reactions of late endosomes/lysosomes. Required for proper trafficking and targeting of the collagen-modifying enzyme lysyl hydroxylase 3 (LH3) to intracellular collagen. Mediates phagolysosomal fusion in macrophages. Proposed to be involved in endosomal maturation implicating in part VIPAS39. In epithelial cells, the VPS33B:VIPAS39 complex may play a role in the apical RAB11A-dependentrecycling pathway and in the maintenance of the apical-basolateral polarity. Seems to be involved in the sorting of specific cargos from the trans-Golgi network to alpha-granule-destined multivesicular bodies (MVBs) promoting MVBs maturation in megakaryocytes. The chain is Vacuolar protein sorting-associated protein 33B (Vps33b) from Mus musculus (Mouse).